Reading from the N-terminus, the 277-residue chain is uncharacterized protein (277 aa).

The SWIM-type zinc finger occupies 139–167; sequence TARELSLDCSCPDYAVPCKHLAATFYLLA.

This is an uncharacterized protein from Mycobacterium tuberculosis (strain ATCC 25618 / H37Rv).